The sequence spans 407 residues: Na(+)-translocating NADH-quinone reductase subunit F (407 aa).

The chain crosses the membrane as a helical span at residues 4–24 (IILGVFFFTAIVVALVFVILG). A 2Fe-2S ferredoxin-type domain is found at 33–125 (GNVEVLINGE…NMKIHVHEEV (93 aa)). Cys-68, Cys-74, Cys-77, and Cys-109 together coordinate [2Fe-2S] cluster. In terms of domain architecture, FAD-binding FR-type spans 128–269 (VKKWECTVRS…SGPFGEFFAR (142 aa)).

The protein belongs to the NqrF family. As to quaternary structure, composed of six subunits; NqrA, NqrB, NqrC, NqrD, NqrE and NqrF. Requires [2Fe-2S] cluster as cofactor. FAD serves as cofactor.

It is found in the cell inner membrane. The enzyme catalyses a ubiquinone + n Na(+)(in) + NADH + H(+) = a ubiquinol + n Na(+)(out) + NAD(+). Its function is as follows. NQR complex catalyzes the reduction of ubiquinone-1 to ubiquinol by two successive reactions, coupled with the transport of Na(+) ions from the cytoplasm to the periplasm. The first step is catalyzed by NqrF, which accepts electrons from NADH and reduces ubiquinone-1 to ubisemiquinone by a one-electron transfer pathway. This chain is Na(+)-translocating NADH-quinone reductase subunit F, found in Methylococcus capsulatus (strain ATCC 33009 / NCIMB 11132 / Bath).